Here is a 482-residue protein sequence, read N- to C-terminus: Cardiolipin synthase (482 aa).

The next 2 membrane-spanning stretches (helical) occupy residues 4-24 (LAYL…VTVF) and 34-54 (WAWL…YLIF). PLD phosphodiesterase domains follow at residues 217 to 244 (LNYR…GDEY) and 395 to 422 (DNGF…DFRS). Active-site residues include histidine 222, lysine 224, aspartate 229, histidine 400, lysine 402, and aspartate 407.

It belongs to the phospholipase D family. Cardiolipin synthase subfamily.

The protein resides in the cell membrane. It carries out the reaction 2 a 1,2-diacyl-sn-glycero-3-phospho-(1'-sn-glycerol) = a cardiolipin + glycerol. Functionally, catalyzes the reversible phosphatidyl group transfer from one phosphatidylglycerol molecule to another to form cardiolipin (CL) (diphosphatidylglycerol) and glycerol. In Listeria innocua serovar 6a (strain ATCC BAA-680 / CLIP 11262), this protein is Cardiolipin synthase (cls).